The primary structure comprises 82 residues: Sec-independent protein translocase protein TatA (82 aa).

The helical transmembrane segment at 1–21 threads the bilayer; the sequence is MGLSTTHLIIFLVIIVLIFGT.

It belongs to the TatA/E family. As to quaternary structure, the Tat system comprises two distinct complexes: a TatABC complex, containing multiple copies of TatA, TatB and TatC subunits, and a separate TatA complex, containing only TatA subunits. Substrates initially bind to the TatABC complex, which probably triggers association of the separate TatA complex to form the active translocon.

It localises to the cell inner membrane. In terms of biological role, part of the twin-arginine translocation (Tat) system that transports large folded proteins containing a characteristic twin-arginine motif in their signal peptide across membranes. TatA could form the protein-conducting channel of the Tat system. The polypeptide is Sec-independent protein translocase protein TatA (Leptothrix cholodnii (strain ATCC 51168 / LMG 8142 / SP-6) (Leptothrix discophora (strain SP-6))).